A 204-amino-acid polypeptide reads, in one-letter code: FMN-dependent NADH:quinone oxidoreductase 5 (204 aa).

S10 contacts FMN.

Belongs to the azoreductase type 1 family. As to quaternary structure, homodimer. It depends on FMN as a cofactor.

The enzyme catalyses 2 a quinone + NADH + H(+) = 2 a 1,4-benzosemiquinone + NAD(+). The catalysed reaction is N,N-dimethyl-1,4-phenylenediamine + anthranilate + 2 NAD(+) = 2-(4-dimethylaminophenyl)diazenylbenzoate + 2 NADH + 2 H(+). Functionally, quinone reductase that provides resistance to thiol-specific stress caused by electrophilic quinones. Also exhibits azoreductase activity. Catalyzes the reductive cleavage of the azo bond in aromatic azo compounds to the corresponding amines. The protein is FMN-dependent NADH:quinone oxidoreductase 5 of Burkholderia lata (strain ATCC 17760 / DSM 23089 / LMG 22485 / NCIMB 9086 / R18194 / 383).